The sequence spans 156 residues: Ribosomal RNA large subunit methyltransferase H (156 aa).

S-adenosyl-L-methionine contacts are provided by residues Leu72, Gly104, and Phe123 to Trp128.

The protein belongs to the RNA methyltransferase RlmH family. Homodimer.

It localises to the cytoplasm. It carries out the reaction pseudouridine(1915) in 23S rRNA + S-adenosyl-L-methionine = N(3)-methylpseudouridine(1915) in 23S rRNA + S-adenosyl-L-homocysteine + H(+). Specifically methylates the pseudouridine at position 1915 (m3Psi1915) in 23S rRNA. This is Ribosomal RNA large subunit methyltransferase H from Ruegeria sp. (strain TM1040) (Silicibacter sp.).